We begin with the raw amino-acid sequence, 448 residues long: Vicilin Cor a 11.0101 (448 aa).

The segment covering Met-1–Glu-44 has biased composition (basic and acidic residues). Residues Met-1–Asp-66 form a disordered region. An N-linked (GlcNAc...) asparagine glycan is attached at Asn-47. Cupin type-1 domains lie at Glu-84–Glu-220 and Ile-263–Glu-418. N-linked (GlcNAc...) asparagine glycosylation occurs at Asn-301. Residues Cys-333, His-335, and His-362 each contribute to the Cu cation site.

This sequence belongs to the 7S seed storage protein family. Homotrimer. Homohexamer. Post-translationally, N-glycosylated at Asn-301 mostly with xylosylated paucimannosidic-type N-glycan MMX (an N-linked glycan with beta-1,2-xylose residue in the structure) and also with MMXF (a complex N-linked glycan with alpha-1,3-fucose and beta-1,2-xylose residues in the structure). In terms of processing, a mixture of proteolytically processed and unprocessed subunits exist. In terms of tissue distribution, expressed in seed (at protein level). Expressed in seed.

In terms of biological role, seed storage protein. Does not have superoxide dismutase (SOD) activity. This chain is Vicilin Cor a 11.0101, found in Corylus avellana (European hazel).